Reading from the N-terminus, the 152-residue chain is D-aminoacyl-tRNA deacylase (152 aa).

Residues 142–143 (GP) carry the Gly-cisPro motif, important for rejection of L-amino acids motif.

Belongs to the DTD family. In terms of assembly, homodimer.

The protein resides in the cytoplasm. It catalyses the reaction glycyl-tRNA(Ala) + H2O = tRNA(Ala) + glycine + H(+). The enzyme catalyses a D-aminoacyl-tRNA + H2O = a tRNA + a D-alpha-amino acid + H(+). An aminoacyl-tRNA editing enzyme that deacylates mischarged D-aminoacyl-tRNAs. Also deacylates mischarged glycyl-tRNA(Ala), protecting cells against glycine mischarging by AlaRS. Acts via tRNA-based rather than protein-based catalysis; rejects L-amino acids rather than detecting D-amino acids in the active site. By recycling D-aminoacyl-tRNA to D-amino acids and free tRNA molecules, this enzyme counteracts the toxicity associated with the formation of D-aminoacyl-tRNA entities in vivo and helps enforce protein L-homochirality. This is D-aminoacyl-tRNA deacylase from Burkholderia cenocepacia (strain HI2424).